Consider the following 418-residue polypeptide: Beta-2 adrenergic receptor (418 aa).

Topologically, residues 1–34 (MGQPGNRSVFLLAPNGSHAPDQDVPQERDEAWVV) are extracellular. Residues N6 and N15 are each glycosylated (N-linked (GlcNAc...) asparagine). The chain crosses the membrane as a helical span at residues 35-58 (GMAIVMSLIVLAIVFGNVLVITAI). Residues 59–71 (AKFERLQTVTNYF) lie on the Cytoplasmic side of the membrane. A helical membrane pass occupies residues 72–95 (ITSLACADLVMGLAVVPFGASHIL). The Extracellular segment spans residues 96–106 (MKMWTFGSFWC). Cystine bridges form between C106–C191 and C184–C190. The chain crosses the membrane as a helical span at residues 107–129 (EFWISIDVLCVTASIETLCVIAV). Residues 130-150 (DRYLAITSPFKYQCLLTKNKA) are Cytoplasmic-facing. Residue Y141 is modified to Phosphotyrosine. Residues 151 to 174 (RVVILMVWVVSGLISFLPIKMHWY) traverse the membrane as a helical segment. Residues 175 to 196 (QATHREALNCYAEEACCDFFTN) are Extracellular-facing. The chain crosses the membrane as a helical span at residues 197–220 (QPYAIASSIVSFYLPLVVMVFVYS). Residues 221 to 274 (RVFQVARRQLQKIDKSEGRFHAQNLSQAEQDGRSGPGHRRSSKFCLKEHKALKT) lie on the Cytoplasmic side of the membrane. S246 carries the post-translational modification Phosphoserine. 2 positions are modified to phosphoserine; by PKA: S261 and S262. C265 carries S-palmitoyl cysteine lipidation. The helical transmembrane segment at 275-298 (LGIIMGTFTLCWLPFFIVNIVHGI) threads the bilayer. Over 299–305 (HDNLIPK) the chain is Extracellular. A helical transmembrane segment spans residues 306 to 329 (EVYILLNWVGYVNSAFNPLIYCRS). Over 330–418 (PDFRMAFQEL…RNCSTNDSML (89 aa)) the chain is Cytoplasmic. The S-palmitoyl cysteine moiety is linked to residue C341. 2 positions are modified to phosphoserine; by PKA: S345 and S346. S355 and S356 each carry phosphoserine; by BARK. Positions 381–418 (RLCEDAPGPEGCAHRQGTVPDDSTDSQGRNCSTNDSML) are disordered. 4-hydroxyproline occurs at positions 387 and 400. A compositionally biased stretch (polar residues) spans 405–418 (DSQGRNCSTNDSML). Positions 415 to 418 (DSML) match the PDZ-binding motif.

It belongs to the G-protein coupled receptor 1 family. Adrenergic receptor subfamily. ADRB2 sub-subfamily. Binds NHERF1 and GPRASP1. Interacts with ARRB1 and ARRB2. Interacts with SRC. Interacts with USP20 and USP33. Interacts with VHL; the interaction, which is increased on hydroxylation of ADRB2, ubiquitinates ADRB2 leading to its degradation. Interacts with EGLN3; the interaction hydroxylates ADRB2 facilitating VHL-E3 ligase-mediated ubiquitination. Interacts (via PDZ-binding motif) with SNX27 (via PDZ domain); the interaction is required when endocytosed to prevent degradation in lysosomes and promote recycling to the plasma membrane. Interacts with CNIH4. Interacts with ARRDC3. Interacts with NEDD4. Interacts with MARCHF2. In terms of processing, palmitoylated; may reduce accessibility of Ser-345 and Ser-346 by anchoring Cys-341 to the plasma membrane. Agonist stimulation promotes depalmitoylation and further allows Ser-345 and Ser-346 phosphorylation. Phosphorylated by PKA and BARK upon agonist stimulation, which mediates homologous desensitization of the receptor. PKA-mediated phosphorylation seems to facilitate phosphorylation by BARK. Post-translationally, phosphorylation of Tyr-141 is induced by insulin and leads to supersensitization of the receptor. In terms of processing, polyubiquitinated. Agonist-induced ubiquitination leads to sort internalized receptors to the lysosomes for degradation. Deubiquitination by USP20 and USP33, leads to ADRB2 recycling and resensitization after prolonged agonist stimulation. USP20 and USP33 are constitutively associated and are dissociated immediately after agonist stimulation. Ubiquitination by the VHL-E3 ligase complex is oxygen-dependent. Hydroxylation by EGLN3 occurs only under normoxia and increases the interaction with VHL and the subsequent ubiquitination and degradation of ADRB2. Post-translationally, palmitoylated. Mainly palmitoylated at Cys-341. Palmitoylation may reduce accessibility of phosphorylation sites by anchoring the receptor to the plasma membrane. Agonist stimulation promotes depalmitoylation and further allows Ser-345 and Ser-346 phosphorylation. Also undergoes transient, ligand-induced palmitoylation at Cys-265 probably by ZDHHC9, ZDHHC14 and ZDHHC18 within the Golgi. Palmitoylation at Cys-265 requires phosphorylation by PKA and receptor internalization and stabilizes the receptor. Could be depalmitoylated by LYPLA1 at the plasma membrane. Expressed in heart, liver, lung, skeletal muscle and subcutaneous adipose tissue.

The protein localises to the cell membrane. Its subcellular location is the early endosome. It is found in the golgi apparatus. Its function is as follows. Beta-adrenergic receptors mediate the catecholamine-induced activation of adenylate cyclase through the action of G proteins. The beta-2-adrenergic receptor binds epinephrine with an approximately 30-fold greater affinity than it does norepinephrine. The sequence is that of Beta-2 adrenergic receptor (ADRB2) from Sus scrofa (Pig).